We begin with the raw amino-acid sequence, 245 residues long: tRNA1(Val) (adenine(37)-N6)-methyltransferase (245 aa).

The protein belongs to the methyltransferase superfamily. tRNA (adenine-N(6)-)-methyltransferase family.

The protein localises to the cytoplasm. It catalyses the reaction adenosine(37) in tRNA1(Val) + S-adenosyl-L-methionine = N(6)-methyladenosine(37) in tRNA1(Val) + S-adenosyl-L-homocysteine + H(+). Functionally, specifically methylates the adenine in position 37 of tRNA(1)(Val) (anticodon cmo5UAC). In Escherichia coli O6:K15:H31 (strain 536 / UPEC), this protein is tRNA1(Val) (adenine(37)-N6)-methyltransferase.